Reading from the N-terminus, the 274-residue chain is Pantothenate synthetase (274 aa).

27-34 (MGALHQGH) provides a ligand contact to ATP. Histidine 34 serves as the catalytic Proton donor. A (R)-pantoate-binding site is contributed by glutamine 58. Glutamine 58 contributes to the beta-alanine binding site. ATP is bound at residue 144–147 (GKKD). A (R)-pantoate-binding site is contributed by glutamine 150. ATP-binding positions include isoleucine 173 and 181 to 184 (LSSR).

It belongs to the pantothenate synthetase family. Homodimer.

Its subcellular location is the cytoplasm. It carries out the reaction (R)-pantoate + beta-alanine + ATP = (R)-pantothenate + AMP + diphosphate + H(+). Its pathway is cofactor biosynthesis; (R)-pantothenate biosynthesis; (R)-pantothenate from (R)-pantoate and beta-alanine: step 1/1. In terms of biological role, catalyzes the condensation of pantoate with beta-alanine in an ATP-dependent reaction via a pantoyl-adenylate intermediate. This is Pantothenate synthetase from Sulfurovum sp. (strain NBC37-1).